The following is a 479-amino-acid chain: Glutamyl-tRNA reductase (479 aa).

Residues 49–52 (TCNR), Ser109, 114–116 (EQQ), and Gln120 each bind substrate. Cys50 serves as the catalytic Nucleophile. Position 191–196 (191–196 (GAGSMG)) interacts with NADP(+).

It belongs to the glutamyl-tRNA reductase family. As to quaternary structure, homodimer.

The catalysed reaction is (S)-4-amino-5-oxopentanoate + tRNA(Glu) + NADP(+) = L-glutamyl-tRNA(Glu) + NADPH + H(+). It functions in the pathway porphyrin-containing compound metabolism; protoporphyrin-IX biosynthesis; 5-aminolevulinate from L-glutamyl-tRNA(Glu): step 1/2. In terms of biological role, catalyzes the NADPH-dependent reduction of glutamyl-tRNA(Glu) to glutamate 1-semialdehyde (GSA). This chain is Glutamyl-tRNA reductase, found in Rhodococcus jostii (strain RHA1).